A 629-amino-acid chain; its full sequence is tRNA uridine 5-carboxymethylaminomethyl modification enzyme MnmG (629 aa).

FAD contacts are provided by residues 13–18 (GGGHAG), Val125, and Ser180. 273–287 (GPRYCPSIEDKIHRF) is a binding site for NAD(+). Gln370 contributes to the FAD binding site.

Belongs to the MnmG family. Homodimer. Heterotetramer of two MnmE and two MnmG subunits. FAD is required as a cofactor.

The protein localises to the cytoplasm. Its function is as follows. NAD-binding protein involved in the addition of a carboxymethylaminomethyl (cmnm) group at the wobble position (U34) of certain tRNAs, forming tRNA-cmnm(5)s(2)U34. This is tRNA uridine 5-carboxymethylaminomethyl modification enzyme MnmG from Shewanella sp. (strain ANA-3).